Consider the following 810-residue polypeptide: Protein kinase C-binding protein NELL1 (810 aa).

The signal sequence occupies residues 1 to 21 (MPMDLILVVWFCVCTARTVVG). N-linked (GlcNAc...) asparagine glycans are attached at residues asparagine 40, asparagine 53, asparagine 83, asparagine 224, asparagine 294, and asparagine 372. Residues 64-227 (EREIHAAPHV…TQCPNLNHTC (164 aa)) enclose the Laminin G-like domain. Positions 271–332 (KTCQVSGLLY…IAGQCCKVCR (62 aa)) constitute a VWFC 1 domain. Cystine bridges form between cysteine 395-cysteine 407, cysteine 401-cysteine 416, and cysteine 418-cysteine 432. Residues aspartate 434, isoleucine 435, and glutamate 437 each coordinate Ca(2+). The 42-residue stretch at 434–475 (DIDECAAKMHYCHANTVCVNLPGLYRCDCVPGYIRVDDFSCT) folds into the EGF-like 1; calcium-binding domain. Intrachain disulfides connect cysteine 438/cysteine 451, cysteine 445/cysteine 460, cysteine 462/cysteine 474, cysteine 480/cysteine 493, cysteine 487/cysteine 502, cysteine 504/cysteine 515, cysteine 519/cysteine 529, cysteine 523/cysteine 535, cysteine 537/cysteine 546, cysteine 553/cysteine 566, cysteine 560/cysteine 575, cysteine 577/cysteine 594, cysteine 600/cysteine 613, cysteine 607/cysteine 622, and cysteine 624/cysteine 630. Residues asparagine 453, leucine 454, and leucine 457 each coordinate Ca(2+). In terms of domain architecture, EGF-like 2; calcium-binding spans 476-516 (EHDECGSGQHNCDENAICTNTVQGHSCTCKPGYVGNGTICR). Asparagine 511 is a glycosylation site (N-linked (GlcNAc...) asparagine). Positions 517 to 547 (AFCEEGCRYGGTCVAPNKCVCPSGFTGSHCE) constitute an EGF-like 3 domain. Residues 549–587 (DIDECSEGIIECHNHSRCVNLPGWYHCECRSGFHDDGTY) form the EGF-like 4; calcium-binding domain. Asparagine 562 carries an N-linked (GlcNAc...) asparagine glycan. Positions 596 to 631 (DIDECALRTHTCWNDSACINLAGGFDCLCPSGPSCS) constitute an EGF-like 5; calcium-binding domain. N-linked (GlcNAc...) asparagine glycosylation is present at asparagine 609. Residues 692-750 (SQCLDQNGHKLYRSGDNWTHSCQQCRCLEGEVDCWPLTCPNLSCEYTAILEGECCPRCV) form the VWFC 2 domain. 3 N-linked (GlcNAc...) asparagine glycosylation sites follow: asparagine 708, asparagine 732, and asparagine 758.

Homotrimer. Binds to PKC beta-1. Interacts with ATRAID; the interaction promotes osteoblast cell differentiation and mineralization. Interacts with ROBO3.

It is found in the cytoplasm. It localises to the nucleus envelope. The protein resides in the secreted. Its function is as follows. Plays a role in the control of cell growth and differentiation. Promotes osteoblast cell differentiation and terminal mineralization. The protein is Protein kinase C-binding protein NELL1 (NELL1) of Homo sapiens (Human).